A 493-amino-acid chain; its full sequence is Argininosuccinate lyase (493 aa).

This sequence belongs to the lyase 1 family. Argininosuccinate lyase subfamily.

The protein localises to the cytoplasm. It carries out the reaction 2-(N(omega)-L-arginino)succinate = fumarate + L-arginine. The protein operates within amino-acid biosynthesis; L-arginine biosynthesis; L-arginine from L-ornithine and carbamoyl phosphate: step 3/3. This Methanospirillum hungatei JF-1 (strain ATCC 27890 / DSM 864 / NBRC 100397 / JF-1) protein is Argininosuccinate lyase.